The primary structure comprises 367 residues: Nodulation protein NolF (367 aa).

Belongs to the membrane fusion protein (MFP) (TC 8.A.1) family.

In terms of biological role, involved in the production of Medicago-specific nodulation signal molecule. This chain is Nodulation protein NolF (nolF), found in Rhizobium meliloti (strain 1021) (Ensifer meliloti).